The following is a 36-amino-acid chain: Kappa-theraphotoxin-Pg1a (36 aa).

Cystine bridges form between Cys-4–Cys-19, Cys-11–Cys-24, and Cys-18–Cys-31.

It belongs to the neurotoxin 10 (Hwtx-1) family. 44 (Jztx-4) subfamily. Expressed by the venom gland.

The protein localises to the secreted. Gating modifier of Kv2.1/KCNB1 (IC(50)=5.1 nM), Kv2.2/KCNB2 and Kv4.3/KCND3 channels (IC(50)=39 nM). Acts by shifting the channel activation to more depolarized potentials by stabilizing the resting conformation of the voltage sensor. It completely inhibits opening of the Kv2.1/KCNB1 channel at negative membrane voltages and dramatically shifts channel activation to positive voltages. May act by partitioning into lipid membranes and then by binding the voltage sensor paddle of the channel from a place within the membrane. The sequence is that of Kappa-theraphotoxin-Pg1a from Chilobrachys guangxiensis (Chinese earth tiger tarantula).